The sequence spans 346 residues: N-acetyl-gamma-glutamyl-phosphate reductase (346 aa).

Cys149 is a catalytic residue.

The protein belongs to the NAGSA dehydrogenase family. Type 1 subfamily.

Its subcellular location is the cytoplasm. The catalysed reaction is N-acetyl-L-glutamate 5-semialdehyde + phosphate + NADP(+) = N-acetyl-L-glutamyl 5-phosphate + NADPH + H(+). It participates in amino-acid biosynthesis; L-arginine biosynthesis; N(2)-acetyl-L-ornithine from L-glutamate: step 3/4. Catalyzes the NADPH-dependent reduction of N-acetyl-5-glutamyl phosphate to yield N-acetyl-L-glutamate 5-semialdehyde. The protein is N-acetyl-gamma-glutamyl-phosphate reductase of Desulfotalea psychrophila (strain LSv54 / DSM 12343).